Here is a 399-residue protein sequence, read N- to C-terminus: MSQCVPNCHIDDTPAAATTTVRSTTAADIPILDYEVAELTWENGQLGLHGLGPPRVTASSTKYSTGAGGTLESIVDQATRLPNPKPTDELVPWFHHRSSRAAMAMDALVPCSNLVHEQQSKPGGVGSTRVGSCSDGRTMGGGKRARVAPEWSGGGSQRLTMDTYDVGFTSTSMGSHDNTIDDHDSVCHSRPQMEDEEEKKAGGKSSVSTKRSRAAAIHNQSERKRRDKINQRMKTLQKLVPNSSKTDKASMLDEVIEYLKQLQAQVSMMSRMNMPSMMLPMAMQQQQQLQMSLMSNPMGLGMGMGMPGLGLLDLNSMNRAAASAPNIHANMMPNPFLPMNCPSWDASSNDSRFQSPLIPDPMSAFLACSTQPTTMEAYSRMATLYQQMQQQLPPPSNPK.

Disordered regions lie at residues 119–158 and 173–228; these read QSKP…GSQR and MGSH…RRDK. Positions 178–201 are enriched in basic and acidic residues; sequence NTIDDHDSVCHSRPQMEDEEEKKA. Positions 213 to 262 constitute a bHLH domain; the sequence is RAAAIHNQSERKRRDKINQRMKTLQKLVPNSSKTDKASMLDEVIEYLKQL.

As to quaternary structure, homodimer. Associates to PTAC12/HMR/PAP5 which acts as a transcriptional coactivator. Interacts with the Pfr form of phyB but barely with that of phyA. Binds to COP1. Post-translationally, ubiquitinated and subsequently targeted to protein degradation by COP1 in the dark, but not in far-red light. In terms of tissue distribution, mainly expressed in stems, leaves, seedlings, fruits and flowers, and, to a lower extent, in roots.

The protein resides in the nucleus. Stabilized by phyA but destabilized by phyB. Accumulates in the dark but not in far-red light upon MG132 treatment, a 26S proteasome inhibitor (at protein level). Functionally, transcription factor binding to G-box elements (5'-CACGTG-3') in target genes promoters, particularly in far-red light but barely in the dark. Required during the fertilization of ovules by pollen. Repressor of phytochrome A-mediated far-red light responses including seed germination, suppression of hypocotyl elongation, and randomization of hypocotyl growth orientation. Does not inhibit phyB-induced red light responses. This Arabidopsis thaliana (Mouse-ear cress) protein is Transcription factor UNE10.